The chain runs to 248 residues: 5'-nucleotidase SurE (248 aa).

4 residues coordinate a divalent metal cation: aspartate 8, aspartate 9, serine 39, and asparagine 91.

The protein belongs to the SurE nucleotidase family. The cofactor is a divalent metal cation.

The protein resides in the cytoplasm. The enzyme catalyses a ribonucleoside 5'-phosphate + H2O = a ribonucleoside + phosphate. Nucleotidase that shows phosphatase activity on nucleoside 5'-monophosphates. This Neisseria meningitidis serogroup C / serotype 2a (strain ATCC 700532 / DSM 15464 / FAM18) protein is 5'-nucleotidase SurE.